Here is a 272-residue protein sequence, read N- to C-terminus: Indole-3-glycerol phosphate synthase (272 aa).

Belongs to the TrpC family.

The catalysed reaction is 1-(2-carboxyphenylamino)-1-deoxy-D-ribulose 5-phosphate + H(+) = (1S,2R)-1-C-(indol-3-yl)glycerol 3-phosphate + CO2 + H2O. It participates in amino-acid biosynthesis; L-tryptophan biosynthesis; L-tryptophan from chorismate: step 4/5. In Mycobacterium leprae (strain Br4923), this protein is Indole-3-glycerol phosphate synthase.